A 198-amino-acid polypeptide reads, in one-letter code: GTP cyclohydrolase-2 (198 aa).

R52–E56 is a GTP binding site. 3 residues coordinate Zn(2+): C57, C68, and C70. Residues Q73, E94–R96, and T116 each bind GTP. D128 acts as the Proton acceptor in catalysis. Residue R130 is the Nucleophile of the active site. GTP contacts are provided by T151 and K156.

It belongs to the GTP cyclohydrolase II family. Requires Zn(2+) as cofactor.

The catalysed reaction is GTP + 4 H2O = 2,5-diamino-6-hydroxy-4-(5-phosphoribosylamino)-pyrimidine + formate + 2 phosphate + 3 H(+). It participates in cofactor biosynthesis; riboflavin biosynthesis; 5-amino-6-(D-ribitylamino)uracil from GTP: step 1/4. Functionally, catalyzes the conversion of GTP to 2,5-diamino-6-ribosylamino-4(3H)-pyrimidinone 5'-phosphate (DARP), formate and pyrophosphate. This is GTP cyclohydrolase-2 from Vibrio parahaemolyticus serotype O3:K6 (strain RIMD 2210633).